We begin with the raw amino-acid sequence, 729 residues long: Polyribonucleotide nucleotidyltransferase (729 aa).

The Mg(2+) site is built by aspartate 485 and aspartate 491. One can recognise a KH domain in the interval 552 to 611 (PRITTMKVAEDKIRTIIGKGGATIKGLIESTGVSIDIDDSGVIQLFSPDKMALEEAQKQI). Residues 621–689 (GQTYQGKVSK…KQGRVKLEWK (69 aa)) enclose the S1 motif domain. Positions 710-729 (TMEEQSEEINSGNKISEEEE) are disordered.

This sequence belongs to the polyribonucleotide nucleotidyltransferase family. In terms of assembly, component of the RNA degradosome, which is a multiprotein complex involved in RNA processing and mRNA degradation. It depends on Mg(2+) as a cofactor.

It is found in the cytoplasm. The catalysed reaction is RNA(n+1) + phosphate = RNA(n) + a ribonucleoside 5'-diphosphate. Functionally, involved in mRNA degradation. Catalyzes the phosphorolysis of single-stranded polyribonucleotides processively in the 3'- to 5'-direction. This chain is Polyribonucleotide nucleotidyltransferase, found in Legionella pneumophila (strain Paris).